The sequence spans 1204 residues: MEQAPNMAEPRGPVDHGVQIRFITEPVSGAEMGTLRRGGRRPAKDARASTYGVAVRVQGIAGQPFVVLNSGEKGGDSFGVQIKGANDQGASGALSSDSELPENPYSQVRGFPAPSQSSTSDEDPGTQWNGKLLRSQSQASLAGPGPMDPSNRSTSMLDLAPKAASPGSTIDTAPLSSVDSLINKFDSQLRGQARGRTGHRTRMLPPEQRKRSKSLDSRLPRDTLEERERQSTNHWNPNTKYDNHVGSSKQPAQSPSPSPSPLSGLSRARQTQDWVLQSFEEPQGRAQDPTMLQFKSTPDLLRDQQEAAPPGSVDHMKATIYGILREGSSESETSVRRKVSLVLEKMQPLVMMSSGSSKAVAGQGELTRKVEELQRKLDEEVKKRQKLEPSRVGLERQLEEKTEECSQLQELLERRKGEAQQSNKELQNMKRLLDQGESLRHGLETQVVELQNKLKQVQGPEPAKEVLLKDLLETRELLEEVLEGKQRVEEQLRLRERELTALKGALKEEVASRDQEVEHVRQQCQRDTEQLRKSMQDATQDHAVLEAERQKMSALVRGLQRELEETSEETGHWQSMFQKNKEELRATKQELLQLRMEKEEMEEELGEKIEVLQRELEQARASAGDTRQVEVLKKLCQTQEELKELQAERQSQEVAGRHRDRELEKQLSVLRVEADRGRELEEQNFQLQKTLQQLRQNCEEASKAKMVAEAEAAVLGQRRAAVETTLRETQEENDEFRRRILGLEQQLKETRGLVDGGEAVEARLRDKLQRLEAEKQQLEEALNASQEEEGSLAAAKRALEARLEEAQRGLARLGQEQQTLNRALEEEGKQREVLRRSKAELEEQKRLLDKTVDRLNKELEQIGEASKQALQQLQSQLEDYKEKARREVADAQRQAKDWASEAEKTSGGLNRLQDEIQRLRQALQACQAERDTAQLDKELLAQRLQGLEQEAENKKRSQDDRARQLKGLEEKVSRLEAELDEEKNTVELLTDRVNRGRDQVDQLRTELMQERSARQDLECDKISLERQNKDLKTRLASSEGFQKPSASLSQLESQNQLLQERLQAEEREKTVLQSTNRKLERKVKELSIQIEDERQHVNDQKDQLSLRVKALKRQVDEAEEEIERLDGLRKKAQRELEEQHEVNEQLQARIKSLEKDSWRKASRSAAESTLKHEGLSSDEEFDGVYDPSSIASLLTESNLQTSSC.

A head region spans residues 7–359; it reads MAEPRGPVDH…VMMSSGSSKA (353 aa). A disordered region spans residues 25 to 48; the sequence is EPVSGAEMGTLRRGGRRPAKDARA. The ZIM motif lies at 48-62; the sequence is ASTYGVAVRVQGIAG. The segment at 54–67 is interaction with TJP1/ZO1; it reads AVRVQGIAGQPFVV. The interval 68–269 is disordered; it reads LNSGEKGGDS…SPLSGLSRAR (202 aa). A phosphoserine mark is found at S95, S96, S98, S135, S137, S140, S155, and S165. Positions 126–140 are enriched in polar residues; sequence TQWNGKLLRSQSQAS. A compositionally biased stretch (polar residues) spans 166-190; sequence PGSTIDTAPLSSVDSLINKFDSQLR. The span at 207–231 shows a compositional bias: basic and acidic residues; the sequence is EQRKRSKSLDSRLPRDTLEERERQS. Residues S214, S217, S260, S278, S340, and S353 each carry the phosphoserine modification. The stretch at 360–1161 forms a coiled coil; it reads VAGQGELTRK…SLEKDSWRKA (802 aa). K581 is modified (N6-acetyllysine). Residues 1156–1182 are disordered; that stretch reads DSWRKASRSAAESTLKHEGLSSDEEFD. The tail stretch occupies residues 1162-1204; it reads SRSAAESTLKHEGLSSDEEFDGVYDPSSIASLLTESNLQTSSC. S1176 and S1177 each carry phosphoserine.

It belongs to the cingulin family. As to quaternary structure, homodimer. Interacts with TJP1/ZO1 and SPEF1.

The protein resides in the cell junction. Its subcellular location is the tight junction. Probably plays a role in the formation and regulation of the tight junction (TJ) paracellular permeability barrier. The chain is Cingulin from Callithrix jacchus (White-tufted-ear marmoset).